Consider the following 115-residue polypeptide: Vespryn (115 aa).

An N-terminal signal peptide occupies residues 1–15; that stretch reads MTWLLLCLLAQYENG. Residues 22–115 form the B30.2/SPRY domain; the sequence is SSSAKPYKTS…VKRKDHLRLT (94 aa).

The protein belongs to the ohanin/vespryn family. In terms of tissue distribution, expressed by the venom gland.

It is found in the secreted. Functionally, neurotoxin that produces dose-dependent hypolocomotion and hyperalgesia in mice. May directly act on the central nervous system, as it is 6500-fold more potent when administered intracerebroventricularly than intraperitoneal. In Pogona barbata (Bearded dragon), this protein is Vespryn.